The following is a 91-amino-acid chain: Large ribosomal subunit protein eL34 (91 aa).

The interval 48–69 (RGRPVEMRKLPKTKKRPERPMP) is disordered.

This sequence belongs to the eukaryotic ribosomal protein eL34 family.

The polypeptide is Large ribosomal subunit protein eL34 (rpl34e) (Pyrococcus horikoshii (strain ATCC 700860 / DSM 12428 / JCM 9974 / NBRC 100139 / OT-3)).